The chain runs to 498 residues: ATP synthase subunit beta, chloroplastic (498 aa).

Residue 172 to 179 coordinates ATP; that stretch reads GGAGVGKT.

Belongs to the ATPase alpha/beta chains family. As to quaternary structure, F-type ATPases have 2 components, CF(1) - the catalytic core - and CF(0) - the membrane proton channel. CF(1) has five subunits: alpha(3), beta(3), gamma(1), delta(1), epsilon(1). CF(0) has four main subunits: a(1), b(1), b'(1) and c(9-12).

It is found in the plastid. Its subcellular location is the chloroplast thylakoid membrane. It carries out the reaction ATP + H2O + 4 H(+)(in) = ADP + phosphate + 5 H(+)(out). Produces ATP from ADP in the presence of a proton gradient across the membrane. The catalytic sites are hosted primarily by the beta subunits. The polypeptide is ATP synthase subunit beta, chloroplastic (Asarum canadense (Wild ginger)).